We begin with the raw amino-acid sequence, 590 residues long: MKTCYYELLGVETHASDLELKKAYRKKALQYHPDKNPDNVEEATQKFAVIRAAYEVLSDPQERAWYDSHKEQILNDTPPSTDDYYDYEVDATVTGVTTDELLLFFNSALYTKIDNSAAGIYQIAGKIFAKLAKDEILSGKRLGKFSEYQDDVFEQDINSIGYLKACDNFINKTDKLLYPLFGYSPTDYEYLKHFYKTWSAFNTLKSFSWKDEYMYSKNYDRRTKREVNRRNEKARQQARNEYNKTVKRFVVFIKKLDKRMKEGAKIAEEQRKLKEQQRKNELNNRRKFGNDNNDEEKFHLQSWQTVKEENWDELEKVYDNFGEFENSKNDKEGEVLIYECFICNKTFKSEKQLKNHINTKLHKKNMEEIRKEMEEENITLGLDNLSDLEKFDSADESVKEKEDIDLQALQAELAEIERKLAESSSEDESEDDNLNIEMDIEVEDVSSDENVHVNTKNKKKRKKKKKAKVDTETEESESFDDTKDKRSNELDDLLASLGDKGLQTDDDEDWSTKAKKKKGKQPKKNSKSTKSTPSLSTLPSSMSPTSAIEVCTTCGESFDSRNKLFNHVKIAGHAAVKNVVKRKKVKTKRI.

One can recognise a J domain in the interval 3–72; it reads TCYYELLGVE…RAWYDSHKEQ (70 aa). A compositionally biased stretch (basic and acidic residues) spans 269–284; it reads EQRKLKEQQRKNELNN. Residues 269–293 form a disordered region; the sequence is EQRKLKEQQRKNELNNRRKFGNDNN. A C2H2-type 1 zinc finger spans residues 338–362; the sequence is YECFICNKTFKSEKQLKNHINTKLH. At serine 393 the chain carries Phosphoserine. The segment at 441–546 is disordered; it reads EVEDVSSDEN…TLPSSMSPTS (106 aa). Residues 455–467 show a composition bias toward basic residues; the sequence is TKNKKKRKKKKKA. The span at 480–489 shows a compositional bias: basic and acidic residues; the sequence is DDTKDKRSNE. Threonine 504 bears the Phosphothreonine mark. Residues 513-527 are compositionally biased toward basic residues; that stretch reads KAKKKKGKQPKKNSK. Residues 528 to 546 are compositionally biased toward low complexity; it reads STKSTPSLSTLPSSMSPTS. Residues 549-573 form a C2H2-type 2 zinc finger; that stretch reads EVCTTCGESFDSRNKLFNHVKIAGH.

It localises to the nucleus. This is J protein JJJ1 (JJJ1) from Saccharomyces cerevisiae (strain ATCC 204508 / S288c) (Baker's yeast).